The following is a 1073-amino-acid chain: DNA-directed RNA polymerase subunit beta (1073 aa).

The protein belongs to the RNA polymerase beta chain family. As to quaternary structure, in plastids the minimal PEP RNA polymerase catalytic core is composed of four subunits: alpha, beta, beta', and beta''. When a (nuclear-encoded) sigma factor is associated with the core the holoenzyme is formed, which can initiate transcription.

The protein resides in the plastid. The protein localises to the chloroplast. The enzyme catalyses RNA(n) + a ribonucleoside 5'-triphosphate = RNA(n+1) + diphosphate. Functionally, DNA-dependent RNA polymerase catalyzes the transcription of DNA into RNA using the four ribonucleoside triphosphates as substrates. This is DNA-directed RNA polymerase subunit beta from Aethionema cordifolium (Lebanon stonecress).